Here is a 604-residue protein sequence, read N- to C-terminus: Deuterosome assembly protein 1 (604 aa).

Coiled-coil stretches lie at residues 14–59 (CEAE…NAQT), 85–197 (MTQN…GKKQ), 226–278 (IIEK…ELQS), and 336–399 (QDQP…KQLK). S547 is subject to Phosphoserine. The stretch at 558-601 (AAQHFLLEEEKRAKELEKLLNTHIDELQRHTEFTLNKYSKLKQN) forms a coiled coil.

Belongs to the CEP63 family. Interacts with CEP152; the interaction is mutually exclusive with CEP63.

It is found in the cytoplasm. Functionally, key structural component of the deuterosome, a structure that promotes de novo centriole amplification in multiciliated cells. Deuterosome-mediated centriole amplification occurs in terminally differentiated multiciliated cells and can generate more than 100 centrioles. Probably sufficient for the specification and formation of the deuterosome inner core. Interacts with CEP152 and recruits PLK4 to activate centriole biogenesis. The sequence is that of Deuterosome assembly protein 1 from Homo sapiens (Human).